We begin with the raw amino-acid sequence, 412 residues long: Putative competence-damage inducible protein (412 aa).

It belongs to the CinA family.

The chain is Putative competence-damage inducible protein from Bacillus cereus (strain AH187).